The following is a 245-amino-acid chain: NADH-quinone oxidoreductase subunit C (245 aa).

Positions 1–10 (MSAPQDRTDD) are enriched in basic and acidic residues. 2 disordered regions span residues 1–54 (MSAP…GYGG) and 216–245 (PQRK…RSYQ). Residues 11–28 (GGVPVPVTPAGATGGAPA) show a composition bias toward low complexity. Residues 39 to 54 (GMFGDQGTGDVSGYGG) show a composition bias toward gly residues.

The protein belongs to the complex I 30 kDa subunit family. As to quaternary structure, NDH-1 is composed of 14 different subunits. Subunits NuoB, C, D, E, F, and G constitute the peripheral sector of the complex.

Its subcellular location is the cell membrane. The catalysed reaction is a quinone + NADH + 5 H(+)(in) = a quinol + NAD(+) + 4 H(+)(out). Its function is as follows. NDH-1 shuttles electrons from NADH, via FMN and iron-sulfur (Fe-S) centers, to quinones in the respiratory chain. The immediate electron acceptor for the enzyme in this species is believed to be a menaquinone. Couples the redox reaction to proton translocation (for every two electrons transferred, four hydrogen ions are translocated across the cytoplasmic membrane), and thus conserves the redox energy in a proton gradient. The protein is NADH-quinone oxidoreductase subunit C of Salinispora tropica (strain ATCC BAA-916 / DSM 44818 / JCM 13857 / NBRC 105044 / CNB-440).